The primary structure comprises 449 residues: Probable cysteine proteinase 224L (449 aa).

Residues Cys99, His292, and Asn322 contribute to the active site. Residues 429-449 (DTQIVFIFFLSVVILFIFIIL) traverse the membrane as a helical segment.

This sequence belongs to the peptidase C1 family.

It is found in the membrane. Probable cysteine protease. The protein is Probable cysteine proteinase 224L of Acheta domesticus (House cricket).